The sequence spans 444 residues: 3-isopropylmalate dehydratase large subunit (444 aa).

Residue 348, cysteine 408, and residue 411 together coordinate [4Fe-4S] cluster. Residues glutamate 423–histidine 444 are disordered.

Belongs to the aconitase/IPM isomerase family. LeuC type 1 subfamily. As to quaternary structure, heterodimer of LeuC and LeuD. Requires [4Fe-4S] cluster as cofactor.

It catalyses the reaction (2R,3S)-3-isopropylmalate = (2S)-2-isopropylmalate. Its pathway is amino-acid biosynthesis; L-leucine biosynthesis; L-leucine from 3-methyl-2-oxobutanoate: step 2/4. Catalyzes the isomerization between 2-isopropylmalate and 3-isopropylmalate, via the formation of 2-isopropylmaleate. This chain is 3-isopropylmalate dehydratase large subunit, found in Buchnera aphidicola subsp. Uroleucon rudbeckiae.